We begin with the raw amino-acid sequence, 343 residues long: Probable dual-specificity RNA methyltransferase RlmN (343 aa).

Glu-91 functions as the Proton acceptor in the catalytic mechanism. A Radical SAM core domain is found at 97 to 326 (HPDRITACIS…AEIRREKGAD (230 aa)). A disulfide bond links Cys-104 and Cys-331. The [4Fe-4S] cluster site is built by Cys-111, Cys-115, and Cys-118. Residues 158-159 (GE), Ser-190, 213-215 (SLH), and Asn-289 each bind S-adenosyl-L-methionine. The active-site S-methylcysteine intermediate is the Cys-331.

It belongs to the radical SAM superfamily. RlmN family. It depends on [4Fe-4S] cluster as a cofactor.

The protein localises to the cytoplasm. The catalysed reaction is adenosine(2503) in 23S rRNA + 2 reduced [2Fe-2S]-[ferredoxin] + 2 S-adenosyl-L-methionine = 2-methyladenosine(2503) in 23S rRNA + 5'-deoxyadenosine + L-methionine + 2 oxidized [2Fe-2S]-[ferredoxin] + S-adenosyl-L-homocysteine. The enzyme catalyses adenosine(37) in tRNA + 2 reduced [2Fe-2S]-[ferredoxin] + 2 S-adenosyl-L-methionine = 2-methyladenosine(37) in tRNA + 5'-deoxyadenosine + L-methionine + 2 oxidized [2Fe-2S]-[ferredoxin] + S-adenosyl-L-homocysteine. Functionally, specifically methylates position 2 of adenine 2503 in 23S rRNA and position 2 of adenine 37 in tRNAs. The protein is Probable dual-specificity RNA methyltransferase RlmN of Thermotoga petrophila (strain ATCC BAA-488 / DSM 13995 / JCM 10881 / RKU-1).